Consider the following 119-residue polypeptide: Large ribosomal subunit protein bL20 (119 aa).

This sequence belongs to the bacterial ribosomal protein bL20 family.

In terms of biological role, binds directly to 23S ribosomal RNA and is necessary for the in vitro assembly process of the 50S ribosomal subunit. It is not involved in the protein synthesizing functions of that subunit. This is Large ribosomal subunit protein bL20 from Delftia acidovorans (strain DSM 14801 / SPH-1).